We begin with the raw amino-acid sequence, 25 residues long: Omega-conotoxin CVIB (25 aa).

3 cysteine pairs are disulfide-bonded: cysteine 1/cysteine 16, cysteine 8/cysteine 20, and cysteine 15/cysteine 25. Cysteine 25 is subject to Cysteine amide.

The protein belongs to the conotoxin O1 superfamily. As to expression, expressed by the venom duct.

It localises to the secreted. In terms of biological role, omega-conotoxins act at presynaptic membranes, they bind and block voltage-gated calcium channels (Cav). This toxin blocks N-, P- and Q-type calcium channels. It shows high activities on Cav2.1/CACNA1A (IC(50)=11 nM) and Cav2.2/CACNA1B (IC(50)=7.7 nM). In addition, it shows a higher potency when Cav2.2/CACNA1B is only expressed with the ancillary subunit CACNB3 (IC(50)=1.6 nM) than on Cav2.2/CACNA1B expressed with the ancillary subunits CACNA2D1 and CACNB3 (IC(50)=12 nM). Both the Cav2.2/CACNA1B block by this toxin and the recovery are voltage-independent. It is noteworthy that ancillary subunits beta do not modulate recovery from this toxin block, since Cav2.2/CACNA1B expressed with either the ancillary subunit CACNB2a (isoform 2a) or with CACNB3 exhibits moderate recovery. This is Omega-conotoxin CVIB from Conus catus (Cat cone).